Here is a 413-residue protein sequence, read N- to C-terminus: MGSDVRDMNALLPPVSTLSGNSSCSMPVSSSGQWAPVLDFPPGAPYSSLPPHSFIKQEPTWNPDPHEDQCLSAFTVHFSGQFTGTAGACRYGAFGAPTPSQATTGQARMFPNSPYLSNCLDNQQGMRNQGYSAVAFDGTPSYGHTPSHHTAQFTNHSFKHEDPMGQQTSLGEQQYSVPPPVYGCHTPTDSCTGSQALLLRTPYNSDNLYQMTSQLECMTWNQMNLGSSLKSHGTSYENDSHSTPMLYSCGGQYRIHTHGVFRGIQDVRRVPGVTPAIVRSSTEANEKRPFMCAYPGCNKRYFKLSHLQMHSRKHTGEKPYQCDFKDCERRFSRSDQLKRHQRRHTGIKPFQCKTCQRKFSRSDHLKTHTRTHTGEKPFSCRWPSCQKKFARSDELVRHHNMHQRNMTKLQLAL.

Glycyl lysine isopeptide (Lys-Gly) (interchain with G-Cter in SUMO) cross-links involve residues lysine 56 and lysine 159. A 9aaTAD motif is present at residues 218–226; that stretch reads MTWNQMNLG. 4 consecutive C2H2-type zinc fingers follow at residues 290 to 314, 320 to 344, 350 to 372, and 378 to 402; these read FMCA…SRKH, YQCD…QRRH, FQCK…TRTH, and FSCR…HNMH. Important for interaction with target DNA stretches follow at residues 334–348 and 360–368; these read SDQL…TGIK and SRSDHLKTH.

This sequence belongs to the EGR C2H2-type zinc-finger protein family.

It is found in the nucleus. The protein localises to the cytoplasm. The protein resides in the nucleus speckle. Functionally, transcription factor required for development of the vascular component of the pronephric kidney, the glomus; may repress tubule-specific gene expression in the portion of the pronephros fated to form the glomus. Recognizes and binds to the DNA sequence 5'-GCG(T/G)GGGCG-3'. Inhibits Wnt-signaling during embryonic development. This chain is Wilms tumor protein homolog (wt1), found in Xenopus tropicalis (Western clawed frog).